Reading from the N-terminus, the 122-residue chain is Basic phospholipase A2 homolog (122 aa).

7 disulfides stabilise this stretch: Cys26–Cys116, Cys28–Cys44, Cys43–Cys96, Cys49–Cys122, Cys50–Cys89, Cys57–Cys82, and Cys75–Cys87. The important for membrane-damaging activities in eukaryotes and bacteria; heparin-binding stretch occupies residues 106 to 117 (KKHRVTVKFLCK).

Belongs to the phospholipase A2 family. Group II subfamily. K49 sub-subfamily. As to quaternary structure, homodimer; non-covalently linked. In terms of tissue distribution, expressed by the venom gland.

It localises to the secreted. Its function is as follows. Snake venom phospholipase A2 (PLA2) that has almost no phospholipase A2 activity. Is myotoxic. Displays edema-inducing activities. A model of myotoxic mechanism has been proposed: an apo Lys49-PLA2 is activated by the entrance of a hydrophobic molecule (e.g. fatty acid) at the hydrophobic channel of the protein leading to a reorientation of a monomer. This reorientation causes a transition between 'inactive' to 'active' states, causing alignment of C-terminal and membrane-docking sites (MDoS) side-by-side and putting the membrane-disruption sites (MDiS) in the same plane, exposed to solvent and in a symmetric position for both monomers. The MDoS region stabilizes the toxin on membrane by the interaction of charged residues with phospholipid head groups. Subsequently, the MDiS region destabilizes the membrane with penetration of hydrophobic residues. This insertion causes a disorganization of the membrane, allowing an uncontrolled influx of ions (i.e. calcium and sodium), and eventually triggering irreversible intracellular alterations and cell death. This chain is Basic phospholipase A2 homolog, found in Protobothrops mucrosquamatus (Taiwan habu).